The primary structure comprises 486 residues: Serine/threonine-protein kinase 33 (486 aa).

A disordered region spans residues Val39 to Lys100. The span at Glu41 to Phe53 shows a compositional bias: polar residues. The span at Pro57 to Ser66 shows a compositional bias: basic and acidic residues. Positions Asp68–Ser80 are enriched in polar residues. The region spanning Tyr116–Leu381 is the Protein kinase domain. ATP-binding positions include Leu122–Val130 and Lys145. The Proton acceptor role is filled by Asp238. The disordered stretch occupies residues Lys402–Arg451. Ser407 carries the phosphoserine modification. Residues Thr413–Lys426 show a composition bias toward basic and acidic residues. The segment covering Tyr428–Ser440 has biased composition (polar residues).

The protein belongs to the protein kinase superfamily. CAMK Ser/Thr protein kinase family. CaMK subfamily. In terms of assembly, interacts with vimentin/VIM. Autophosphorylated.

The protein resides in the cytoplasm. It localises to the perinuclear region. The catalysed reaction is L-seryl-[protein] + ATP = O-phospho-L-seryl-[protein] + ADP + H(+). It carries out the reaction L-threonyl-[protein] + ATP = O-phospho-L-threonyl-[protein] + ADP + H(+). Functionally, serine/threonine protein kinase which phosphorylates vimentin/VIM. Therefore may play a specific role in the dynamic behavior of the intermediate filament cytoskeleton. The protein is Serine/threonine-protein kinase 33 (STK33) of Bos taurus (Bovine).